The primary structure comprises 766 residues: DNA ligase (766 aa).

The disordered stretch occupies residues 1–30 (MSTVNAKGAKPATDANGQSLNPEEPSEALR). Residues 57–61 (DAEYD), 106–107 (SL), and Glu141 contribute to the NAD(+) site. Catalysis depends on Lys143, which acts as the N6-AMP-lysine intermediate. NAD(+) contacts are provided by Arg164, Glu201, Lys317, and Lys341. 4 residues coordinate Zn(2+): Cys435, Cys438, Cys454, and Cys460. The BRCT domain maps to 669–758 (STPRTLEGVT…PEAFGDRADA (90 aa)). Residues 747-766 (QGPEAFGDRADAADQPAAGE) form a disordered region.

It belongs to the NAD-dependent DNA ligase family. LigA subfamily. The cofactor is Mg(2+). Requires Mn(2+) as cofactor.

It carries out the reaction NAD(+) + (deoxyribonucleotide)n-3'-hydroxyl + 5'-phospho-(deoxyribonucleotide)m = (deoxyribonucleotide)n+m + AMP + beta-nicotinamide D-nucleotide.. In terms of biological role, DNA ligase that catalyzes the formation of phosphodiester linkages between 5'-phosphoryl and 3'-hydroxyl groups in double-stranded DNA using NAD as a coenzyme and as the energy source for the reaction. It is essential for DNA replication and repair of damaged DNA. This chain is DNA ligase, found in Kocuria rhizophila (strain ATCC 9341 / DSM 348 / NBRC 103217 / DC2201).